The sequence spans 1407 residues: DNA-directed RNA polymerase subunit beta' (1407 aa).

Cys70, Cys72, Cys85, and Cys88 together coordinate Zn(2+). Mg(2+) contacts are provided by Asp460, Asp462, and Asp464. Residues Cys814, Cys888, Cys895, and Cys898 each contribute to the Zn(2+) site. Lys972 carries the N6-acetyllysine modification.

Belongs to the RNA polymerase beta' chain family. In terms of assembly, the RNAP catalytic core consists of 2 alpha, 1 beta, 1 beta' and 1 omega subunit. When a sigma factor is associated with the core the holoenzyme is formed, which can initiate transcription. Mg(2+) is required as a cofactor. Requires Zn(2+) as cofactor.

It carries out the reaction RNA(n) + a ribonucleoside 5'-triphosphate = RNA(n+1) + diphosphate. In terms of biological role, DNA-dependent RNA polymerase catalyzes the transcription of DNA into RNA using the four ribonucleoside triphosphates as substrates. The sequence is that of DNA-directed RNA polymerase subunit beta' from Escherichia coli O1:K1 / APEC.